The sequence spans 298 residues: Small ribosomal subunit protein uS2 (298 aa).

Belongs to the universal ribosomal protein uS2 family.

The chain is Small ribosomal subunit protein uS2 from Leifsonia xyli subsp. xyli (strain CTCB07).